The sequence spans 569 residues: Thiol:disulfide interchange protein DsbD (569 aa).

The signal sequence occupies residues 1–19; that stretch reads MAQRILTLILLLCSTSAFA. 2 disulfides stabilise this stretch: Cys122–Cys128 and Cys187–Cys309. The next 7 membrane-spanning stretches (helical) occupy residues 168–188, 213–233, 248–268, 301–321, 328–348, 362–382, and 391–411; these read LPFS…TPCV, LLTF…GLVV, YVLI…FGLF, IAGL…LLYI, WLGG…LILI, WMEH…VFLL, and GLRL…ITSL. In terms of domain architecture, Thioredoxin spans 430 to 569; it reads LVSVRPLQDW…FSAHLRDRQP (140 aa). Cys484 and Cys487 form a disulfide bridge.

The protein belongs to the thioredoxin family. DsbD subfamily.

The protein resides in the cell inner membrane. It carries out the reaction [protein]-dithiol + NAD(+) = [protein]-disulfide + NADH + H(+). The enzyme catalyses [protein]-dithiol + NADP(+) = [protein]-disulfide + NADPH + H(+). Its function is as follows. Required to facilitate the formation of correct disulfide bonds in some periplasmic proteins and for the assembly of the periplasmic c-type cytochromes. Acts by transferring electrons from cytoplasmic thioredoxin to the periplasm. This transfer involves a cascade of disulfide bond formation and reduction steps. The polypeptide is Thiol:disulfide interchange protein DsbD (Citrobacter koseri (strain ATCC BAA-895 / CDC 4225-83 / SGSC4696)).